A 492-amino-acid chain; its full sequence is Ketol-acid reductoisomerase (NADP(+)) (492 aa).

Residues 14-208 (LDQLGKCRFM…GGHRAGVLQS (195 aa)) enclose the KARI N-terminal Rossmann domain. NADP(+)-binding positions include 45–48 (CGAQ), arginine 68, arginine 76, serine 78, and 108–110 (DKQ). Residue histidine 132 is part of the active site. NADP(+) is bound at residue glycine 158. KARI C-terminal knotted domains are found at residues 209 to 344 (SFVA…NAPQ) and 345 to 485 (FDGK…MKDM). Aspartate 217, glutamate 221, glutamate 389, and glutamate 393 together coordinate Mg(2+). Serine 414 is a binding site for substrate.

This sequence belongs to the ketol-acid reductoisomerase family. Requires Mg(2+) as cofactor.

The catalysed reaction is (2R)-2,3-dihydroxy-3-methylbutanoate + NADP(+) = (2S)-2-acetolactate + NADPH + H(+). The enzyme catalyses (2R,3R)-2,3-dihydroxy-3-methylpentanoate + NADP(+) = (S)-2-ethyl-2-hydroxy-3-oxobutanoate + NADPH + H(+). Its pathway is amino-acid biosynthesis; L-isoleucine biosynthesis; L-isoleucine from 2-oxobutanoate: step 2/4. It participates in amino-acid biosynthesis; L-valine biosynthesis; L-valine from pyruvate: step 2/4. In terms of biological role, involved in the biosynthesis of branched-chain amino acids (BCAA). Catalyzes an alkyl-migration followed by a ketol-acid reduction of (S)-2-acetolactate (S2AL) to yield (R)-2,3-dihydroxy-isovalerate. In the isomerase reaction, S2AL is rearranged via a Mg-dependent methyl migration to produce 3-hydroxy-3-methyl-2-ketobutyrate (HMKB). In the reductase reaction, this 2-ketoacid undergoes a metal-dependent reduction by NADPH to yield (R)-2,3-dihydroxy-isovalerate. This chain is Ketol-acid reductoisomerase (NADP(+)), found in Pectobacterium carotovorum subsp. carotovorum (strain PC1).